A 56-amino-acid polypeptide reads, in one-letter code: Large ribosomal subunit protein bL33 (56 aa).

Belongs to the bacterial ribosomal protein bL33 family.

This is Large ribosomal subunit protein bL33 from Rickettsia typhi (strain ATCC VR-144 / Wilmington).